The chain runs to 505 residues: MSYSLLFLLALQFCLGSASRTTLTSAHSRELTTPPTSPQATAAWLPPGGTSWAEGGTVSQPLSNFTGSVDSHGTCQCSVSLPDTAFPADRVERLEYTAHILSQKFEREFSKVKEYVQLISVYEKRLLNLTVRVEVMEKDSISYTELDFELIKLEVKEMQKLVLQLKKNFVGSTHIIDMLEVEIRNMTLLVEKLESLDQNNVLSIRRQILALKTKLKECEASKSDLVPATPPPPAPGSCSHGGVVNISAPSVIQLNWLGFSYKYGAWGRDYSPQHPERTLYWVAPLNTDARALEYYRLYDSLDNLLIYSHFRDYRIRYGQGGGTVAFNNNLYVNWYNGGNIAKINLTTNVVDVNRPLPLAAYNNRFSYANVNWQDIDLAVDEQALWAIYATEASTGNIVISKLNDTTLEVISTWVTKQYKPSVSNAFMVCGVLYATRTLNTKTEEIFYYYDTNTEREGNLGITMRKMQERIQSINYHPFDQKLYVYNDGYLLNYDLVFLQTPRQPV.

The signal sequence occupies residues 1–18; the sequence is MSYSLLFLLALQFCLGSA. Residues Asn-64 and Asn-128 are each glycosylated (N-linked (GlcNAc...) asparagine). Residues 174-225 are a coiled coil; the sequence is HIIDMLEVEIRNMTLLVEKLESLDQNNVLSIRRQILALKTKLKECEASKSDL. One can recognise an Olfactomedin-like domain in the interval 237–499; that stretch reads SCSHGGVVNI…LLNYDLVFLQ (263 aa). The cysteines at positions 238 and 429 are disulfide-linked.

As to quaternary structure, homomultimer; disulfide-linked. Interacts with NDUFA13. Interacts with cell surface lectins (locutions ricinus communis agglutinin I, concanavalin A and wheat germ agglutinin) and cadherin. In terms of processing, N-glycosylated.

It is found in the secreted. The protein resides in the extracellular space. It localises to the mitochondrion. May promote proliferation of pancreatic cancer cells by favoring the transition from the S to G2/M phase. In myeloid leukemic cell lines, inhibits cell growth and induces cell differentiation and apoptosis. May play a role in the inhibition of EIF4EBP1 phosphorylation/deactivation. Facilitates cell adhesion, most probably through interaction with cell surface lectins and cadherin. The chain is Olfactomedin-4 (Olfm4) from Mus musculus (Mouse).